The chain runs to 320 residues: Malate dehydrogenase (320 aa).

NAD(+) is bound by residues G10–G15 and D34. Residues R83 and R89 each coordinate substrate. NAD(+)-binding positions include N96 and I119–N121. 2 residues coordinate substrate: N121 and R152. H176 (proton acceptor) is an active-site residue.

This sequence belongs to the LDH/MDH superfamily. MDH type 3 family.

It carries out the reaction (S)-malate + NAD(+) = oxaloacetate + NADH + H(+). Catalyzes the reversible oxidation of malate to oxaloacetate. The chain is Malate dehydrogenase from Rhizobium johnstonii (strain DSM 114642 / LMG 32736 / 3841) (Rhizobium leguminosarum bv. viciae).